The primary structure comprises 181 residues: Acireductone dioxygenase (181 aa).

Residues H91, H93, E97, and H136 each coordinate Fe(2+). Ni(2+) is bound by residues H91, H93, E97, and H136.

The protein belongs to the acireductone dioxygenase (ARD) family. Monomer. Interacts with MMP14. The cofactor is Fe(2+). It depends on Ni(2+) as a cofactor.

The protein resides in the cytoplasm. It is found in the nucleus. Its subcellular location is the cell membrane. It carries out the reaction 1,2-dihydroxy-5-(methylsulfanyl)pent-1-en-3-one + O2 = 4-methylsulfanyl-2-oxobutanoate + formate + 2 H(+). It catalyses the reaction 1,2-dihydroxy-5-(methylsulfanyl)pent-1-en-3-one + O2 = 3-(methylsulfanyl)propanoate + CO + formate + 2 H(+). It participates in amino-acid biosynthesis; L-methionine biosynthesis via salvage pathway; L-methionine from S-methyl-5-thio-alpha-D-ribose 1-phosphate: step 5/6. In terms of biological role, catalyzes 2 different reactions between oxygen and the acireductone 1,2-dihydroxy-3-keto-5-methylthiopentene (DHK-MTPene) depending upon the metal bound in the active site. Fe-containing acireductone dioxygenase (Fe-ARD) produces formate and 2-keto-4-methylthiobutyrate (KMTB), the alpha-ketoacid precursor of methionine in the methionine recycle pathway. Ni-containing acireductone dioxygenase (Ni-ARD) produces methylthiopropionate, carbon monoxide and formate, and does not lie on the methionine recycle pathway. The chain is Acireductone dioxygenase (adi1) from Danio rerio (Zebrafish).